Consider the following 98-residue polypeptide: Large ribosomal subunit protein uL23 (98 aa).

This sequence belongs to the universal ribosomal protein uL23 family. Part of the 50S ribosomal subunit. Contacts protein L29, and trigger factor when it is bound to the ribosome.

Its function is as follows. One of the early assembly proteins it binds 23S rRNA. One of the proteins that surrounds the polypeptide exit tunnel on the outside of the ribosome. Forms the main docking site for trigger factor binding to the ribosome. This is Large ribosomal subunit protein uL23 from Streptococcus sanguinis (strain SK36).